We begin with the raw amino-acid sequence, 273 residues long: 4-hydroxy-tetrahydrodipicolinate reductase (273 aa).

Residues 11–16, 102–104, and 126–129 each bind NAD(+); these read GALGRM, GTT, and SPNF. Residue histidine 159 is the Proton donor/acceptor of the active site. Histidine 160 contributes to the (S)-2,3,4,5-tetrahydrodipicolinate binding site. Lysine 163 acts as the Proton donor in catalysis. Residue 169 to 170 participates in (S)-2,3,4,5-tetrahydrodipicolinate binding; sequence GT.

Belongs to the DapB family. In terms of assembly, homotetramer.

It is found in the cytoplasm. The enzyme catalyses (S)-2,3,4,5-tetrahydrodipicolinate + NAD(+) + H2O = (2S,4S)-4-hydroxy-2,3,4,5-tetrahydrodipicolinate + NADH + H(+). The catalysed reaction is (S)-2,3,4,5-tetrahydrodipicolinate + NADP(+) + H2O = (2S,4S)-4-hydroxy-2,3,4,5-tetrahydrodipicolinate + NADPH + H(+). It participates in amino-acid biosynthesis; L-lysine biosynthesis via DAP pathway; (S)-tetrahydrodipicolinate from L-aspartate: step 4/4. Catalyzes the conversion of 4-hydroxy-tetrahydrodipicolinate (HTPA) to tetrahydrodipicolinate. The protein is 4-hydroxy-tetrahydrodipicolinate reductase of Buchnera aphidicola subsp. Cinara cedri (strain Cc).